A 643-amino-acid polypeptide reads, in one-letter code: ATP-dependent RNA helicase DeaD (643 aa).

The Q motif signature appears at 6 to 34; the sequence is TTFADLGLKAPILEALTDLGYEKPSPIQA. One can recognise a Helicase ATP-binding domain in the interval 37-208; sequence IPHLLDGRDV…RRFMKEPQEV (172 aa). 50–57 is a binding site for ATP; the sequence is AQTGSGKT. Positions 156-159 match the DEAD box motif; that stretch reads DEAD. The 148-residue stretch at 232–379 folds into the Helicase C-terminal domain; it reads KNEALVRFLE…EVELPNAELL (148 aa). 2 disordered regions span residues 440–482 and 557–643; these read VPPV…KRER and MNMQ…GGDA. 2 stretches are compositionally biased toward basic and acidic residues: residues 448-482 and 567-643; these read PRRE…KRER and PRTE…GGDA.

The protein belongs to the DEAD box helicase family. DeaD/CsdA subfamily.

The protein localises to the cytoplasm. The catalysed reaction is ATP + H2O = ADP + phosphate + H(+). In terms of biological role, DEAD-box RNA helicase involved in various cellular processes at low temperature, including ribosome biogenesis, mRNA degradation and translation initiation. This Klebsiella pneumoniae protein is ATP-dependent RNA helicase DeaD.